The chain runs to 943 residues: UvrABC system protein A (943 aa).

32–39 lines the ATP pocket; that stretch reads GLSGSGKS. A C4-type zinc finger spans residues 251-278; it reads CPVCGFTVPELEPRLFSFNAPFGSCPTC. ABC transporter domains are found at residues 308-589 and 609-937; these read WNPI…KKSI and GSGR…QYLK. 641-648 is an ATP binding site; sequence GVSGSGKS. Residues 740 to 766 form a C4-type zinc finger; sequence CEACSGDGIIKIEMHFLPDVYVPCEVC.

It belongs to the ABC transporter superfamily. UvrA family. Forms a heterotetramer with UvrB during the search for lesions.

Its subcellular location is the cytoplasm. The UvrABC repair system catalyzes the recognition and processing of DNA lesions. UvrA is an ATPase and a DNA-binding protein. A damage recognition complex composed of 2 UvrA and 2 UvrB subunits scans DNA for abnormalities. When the presence of a lesion has been verified by UvrB, the UvrA molecules dissociate. The chain is UvrABC system protein A from Streptococcus mutans serotype c (strain ATCC 700610 / UA159).